Reading from the N-terminus, the 258-residue chain is Acyl-[acyl-carrier-protein]--UDP-N-acetylglucosamine O-acyltransferase (258 aa).

Belongs to the transferase hexapeptide repeat family. LpxA subfamily. In terms of assembly, homotrimer.

The protein localises to the cytoplasm. It carries out the reaction a (3R)-hydroxyacyl-[ACP] + UDP-N-acetyl-alpha-D-glucosamine = a UDP-3-O-[(3R)-3-hydroxyacyl]-N-acetyl-alpha-D-glucosamine + holo-[ACP]. The protein operates within glycolipid biosynthesis; lipid IV(A) biosynthesis; lipid IV(A) from (3R)-3-hydroxytetradecanoyl-[acyl-carrier-protein] and UDP-N-acetyl-alpha-D-glucosamine: step 1/6. Involved in the biosynthesis of lipid A, a phosphorylated glycolipid that anchors the lipopolysaccharide to the outer membrane of the cell. The chain is Acyl-[acyl-carrier-protein]--UDP-N-acetylglucosamine O-acyltransferase from Pseudomonas fluorescens (strain Pf0-1).